The following is a 1412-amino-acid chain: Cardiac-enriched FHL2-interacting protein (1412 aa).

Disordered regions lie at residues 106–177, 202–443, 460–500, 517–848, 877–923, 935–1255, and 1344–1412; these read VQGE…PKFA, VSNT…YNPP, LETS…SKAP, YSPL…TNKH, SEDS…VPGT, EDPV…YPAT, and RQGS…EGVS. Thr120 is modified (phosphothreonine). The segment covering 135–145 has biased composition (low complexity); it reads SSSKPISKVSS. Pro residues predominate over residues 161 to 171; the sequence is RPPPSKPPALK. The span at 202-212 shows a compositional bias: polar residues; that stretch reads VSNTHQGSHQS. Composition is skewed to basic and acidic residues over residues 285–299 and 306–316; these read WDTH…KDIA and KAPKHYEDMPL. Ser328 bears the Phosphoserine mark. The segment covering 343–352 has biased composition (polar residues); the sequence is SPSGSQSTSG. A compositionally biased stretch (basic residues) spans 378-389; the sequence is KRSKAPWRKPKT. At Ser473 the chain carries Phosphoserine. Basic and acidic residues-rich tracts occupy residues 482–496 and 525–538; these read QEKE…DSYK and GFDE…DSKQ. The segment covering 587-612 has biased composition (low complexity); it reads SHPTFSSPSASSQTHFCVNGEAAESN. The span at 632 to 641 shows a compositional bias: basic and acidic residues; sequence GHPDCRENLP. Composition is skewed to polar residues over residues 670–679, 687–697, and 712–722; these read NGLSRSVSQE, GFQSLPLNQKF, and SDSQSDFTPCR. A compositionally biased stretch (low complexity) spans 728–741; that stretch reads FSTSSSDQSFASFE. Residues 753 to 799 are compositionally biased toward basic and acidic residues; sequence QEDRKSHVSAGDKQRDETAVEKEESQQCASRNEHRGVDEQRQEEIQR. Phosphoserine is present on Ser813. The span at 826-837 shows a compositional bias: basic and acidic residues; it reads ADKDTAHTHAKD. 3 stretches are compositionally biased toward polar residues: residues 904-921, 943-953, and 1047-1066; these read ASES…NDVP, QDETSQQTRKG, and AETS…SPAA. The span at 1164–1175 shows a compositional bias: basic residues; sequence RRAKKLASKRRK. A compositionally biased stretch (basic and acidic residues) spans 1176–1203; sequence SDQLLEKHTEAWEGKSFTEDTQGTERRP. Residues 1401-1412 are compositionally biased toward acidic residues; sequence DDLEDFATEGVS.

In terms of assembly, interacts with FHL2. Expressed in the heart and skeletal muscle (at protein level).

The protein localises to the cytoplasm. The protein resides in the myofibril. Its subcellular location is the sarcomere. It localises to the z line. Its function is as follows. Plays an important role in cardiomyocyte hypertrophy via activation of the calcineurin/NFAT signaling pathway. The sequence is that of Cardiac-enriched FHL2-interacting protein from Mus musculus (Mouse).